The chain runs to 228 residues: DNA mismatch repair protein MutH (228 aa).

This sequence belongs to the MutH family.

The protein localises to the cytoplasm. Sequence-specific endonuclease that cleaves unmethylated GATC sequences. It is involved in DNA mismatch repair. The sequence is that of DNA mismatch repair protein MutH from Yersinia enterocolitica serotype O:8 / biotype 1B (strain NCTC 13174 / 8081).